The primary structure comprises 246 residues: 5'-nucleotidase SurE (246 aa).

Aspartate 8, aspartate 9, serine 39, and asparagine 91 together coordinate a divalent metal cation.

The protein belongs to the SurE nucleotidase family. A divalent metal cation serves as cofactor.

It localises to the cytoplasm. The catalysed reaction is a ribonucleoside 5'-phosphate + H2O = a ribonucleoside + phosphate. Nucleotidase that shows phosphatase activity on nucleoside 5'-monophosphates. The protein is 5'-nucleotidase SurE of Histophilus somni (strain 129Pt) (Haemophilus somnus).